Consider the following 68-residue polypeptide: Large ribosomal subunit protein uL29 (68 aa).

Belongs to the universal ribosomal protein uL29 family.

The chain is Large ribosomal subunit protein uL29 from Rhodopseudomonas palustris (strain BisA53).